A 761-amino-acid polypeptide reads, in one-letter code: Coenzyme PQQ synthesis protein F (761 aa).

Histidine 49 provides a ligand contact to Zn(2+). Catalysis depends on glutamate 52, which acts as the Proton acceptor. Zn(2+)-binding residues include histidine 53 and glutamate 130.

It belongs to the peptidase M16 family. Zn(2+) serves as cofactor.

Its pathway is cofactor biosynthesis; pyrroloquinoline quinone biosynthesis. In terms of biological role, required for coenzyme pyrroloquinoline quinone (PQQ) biosynthesis. It is thought that this protein is a protease that cleaves peptides bond in a small peptide (gene pqqA), providing the glutamate and tyrosine residues which are necessary for the synthesis of PQQ. This chain is Coenzyme PQQ synthesis protein F (pqqF), found in Klebsiella pneumoniae.